A 260-amino-acid polypeptide reads, in one-letter code: Flap endonuclease Xni (260 aa).

Position 104 (Asp-104) interacts with Mg(2+). Positions 160–249 constitute a 5'-3' exonuclease domain; it reads VSPQQLTDYW…LNGNLQQLRL (90 aa). Leu-171, Ala-172, Pro-180, Val-182, and Ile-185 together coordinate K(+). The interval 184–189 is interaction with DNA; sequence GIGPKS.

The protein belongs to the Xni family. Mg(2+) serves as cofactor. Requires K(+) as cofactor.

Functionally, has flap endonuclease activity. During DNA replication, flap endonucleases cleave the 5'-overhanging flap structure that is generated by displacement synthesis when DNA polymerase encounters the 5'-end of a downstream Okazaki fragment. The protein is Flap endonuclease Xni of Pectobacterium carotovorum subsp. carotovorum (strain PC1).